A 68-amino-acid chain; its full sequence is Wasabi receptor toxin (68 aa).

The first 21 residues, methionine 1–aspartate 21, serve as a signal peptide directing secretion. The propeptide occupies methionine 22–arginine 35. 2 disulfides stabilise this stretch: cysteine 44–cysteine 62 and cysteine 48–cysteine 58.

It belongs to the short scorpion toxin superfamily. Potassium channel inhibitor kappa-KTx family. Kappa-KTx 1 subfamily. Monomer. In terms of tissue distribution, expressed by the venom gland.

It localises to the secreted. Its subcellular location is the host cytoplasm. Cell-penetrating peptide (CPP) with defensive purpose that induces pain by specifically activating mammalian sensory neuron TRPA1 channels. It non-covalently binds to the same region than other TRPA1 agonists (irritants), but acts via a distinct biochemical mechanism. Its binding stabilizes the TRPA1 open state and diminishes calcium-permeability. Consequently, it produces pain and pain hypersensitivity, but fails to trigger efferent release of neuropeptides (CGRP) and neurogenic inflammation typically produced by noxious electrophiles. Is not active on voltage-gated potassium channels and other TRP channels. The protein is Wasabi receptor toxin of Urodacus manicatus (Black rock scorpion).